The chain runs to 540 residues: Membrane protein insertase YidC (540 aa).

5 consecutive transmembrane segments (helical) span residues 7-27 (LLVL…QMDY), 345-365 (IVSN…GILY), 415-435 (LGGC…YWTF), 453-473 (LSAQ…MFLL), and 494-514 (PLIF…YWLV).

Belongs to the OXA1/ALB3/YidC family. Type 1 subfamily. In terms of assembly, interacts with the Sec translocase complex via SecD. Specifically interacts with transmembrane segments of nascent integral membrane proteins during membrane integration.

It localises to the cell inner membrane. Required for the insertion and/or proper folding and/or complex formation of integral membrane proteins into the membrane. Involved in integration of membrane proteins that insert both dependently and independently of the Sec translocase complex, as well as at least some lipoproteins. Aids folding of multispanning membrane proteins. This chain is Membrane protein insertase YidC, found in Mannheimia succiniciproducens (strain KCTC 0769BP / MBEL55E).